We begin with the raw amino-acid sequence, 504 residues long: Putative BTB/POZ domain-containing protein R842 (504 aa).

A BTB domain is found at 21 to 91 (SDVKLILKDN…FYGFKSPSVT (71 aa)).

The protein belongs to the mimivirus BTB/WD family.

The protein is Putative BTB/POZ domain-containing protein R842 of Acanthamoeba polyphaga (Amoeba).